The following is a 37-amino-acid chain: Large ribosomal subunit protein bL36 (37 aa).

The protein belongs to the bacterial ribosomal protein bL36 family.

This chain is Large ribosomal subunit protein bL36, found in Sulfurimonas denitrificans (strain ATCC 33889 / DSM 1251) (Thiomicrospira denitrificans (strain ATCC 33889 / DSM 1251)).